The following is a 604-amino-acid chain: Netrin-1 (604 aa).

Residues 1 to 24 form the signal peptide; the sequence is MMRAVWEALAALAAVACLVGAVRG. One can recognise a Laminin N-terminal domain in the interval 47 to 284; sequence HPRRCIPDFV…AVSDLQVGGR (238 aa). Residues N95, N116, and N131 are each glycosylated (N-linked (GlcNAc...) asparagine). 15 disulfides stabilise this stretch: C119-C152, C285-C294, C287-C304, C306-C315, C318-C338, C341-C350, C343-C368, C371-C380, C383-C401, C404-C416, C406-C423, C425-C434, C437-C451, C472-C544, and C491-C601. 3 consecutive Laminin EGF-like domains span residues 285-340, 341-403, and 404-453; these read CKCN…ECVA, CNCN…ACKA, and CDCH…PCIK. Residue N417 is glycosylated (N-linked (GlcNAc...) asparagine). In terms of domain architecture, NTR spans 472 to 601; sequence CDSYCKASKG…FQQREKKGKC (130 aa). Positions 530 to 532 match the Cell attachment site motif; it reads RGD.

In terms of assembly, binds to its receptors; DCC, UNC5A, UNC5B, UNC5C and probably UNC5D. Binds to its receptor; DSCAM. Interacts with DCC. Interacts with APP. In terms of tissue distribution, widely expressed in normal adult tissues with highest levels in heart, small intestine, colon, liver and prostate. Reduced expression in brain tumors and neuroblastomas. Expressed in epididymis (at protein level).

It localises to the secreted. The protein localises to the cytoplasm. Its function is as follows. Netrins control guidance of CNS commissural axons and peripheral motor axons. Its association with either DCC or some UNC5 receptors will lead to axon attraction or repulsion, respectively. Binding to UNC5C might cause dissociation of UNC5C from polymerized TUBB3 in microtubules and thereby lead to increased microtubule dynamics and axon repulsion. Involved in dorsal root ganglion axon projection towards the spinal cord. It also serves as a survival factor via its association with its receptors which prevent the initiation of apoptosis. Involved in tumorigenesis by regulating apoptosis. The polypeptide is Netrin-1 (NTN1) (Homo sapiens (Human)).